The chain runs to 133 residues: ATP synthase epsilon chain, chloroplastic (133 aa).

The protein belongs to the ATPase epsilon chain family. As to quaternary structure, F-type ATPases have 2 components, CF(1) - the catalytic core - and CF(0) - the membrane proton channel. CF(1) has five subunits: alpha(3), beta(3), gamma(1), delta(1), epsilon(1). CF(0) has three main subunits: a, b and c.

It is found in the plastid. The protein resides in the chloroplast thylakoid membrane. Functionally, produces ATP from ADP in the presence of a proton gradient across the membrane. The protein is ATP synthase epsilon chain, chloroplastic of Citrus sinensis (Sweet orange).